Reading from the N-terminus, the 71-residue chain is Prophage lysis protein S homolog EssQ (71 aa).

It belongs to the lambda phage S protein family.

This chain is Prophage lysis protein S homolog EssQ (essQ), found in Escherichia coli (strain K12).